The primary structure comprises 548 residues: Glucose-6-phosphate isomerase 1 (548 aa).

Catalysis depends on glutamate 353, which acts as the Proton donor. Catalysis depends on residues histidine 384 and lysine 512.

Belongs to the GPI family.

Its subcellular location is the cytoplasm. The enzyme catalyses alpha-D-glucose 6-phosphate = beta-D-fructose 6-phosphate. Its pathway is carbohydrate biosynthesis; gluconeogenesis. The protein operates within carbohydrate degradation; glycolysis; D-glyceraldehyde 3-phosphate and glycerone phosphate from D-glucose: step 2/4. Functionally, catalyzes the reversible isomerization of glucose-6-phosphate to fructose-6-phosphate. The chain is Glucose-6-phosphate isomerase 1 from Neisseria meningitidis serogroup A / serotype 4A (strain DSM 15465 / Z2491).